The primary structure comprises 592 residues: Thiol:disulfide interchange protein DsbD (592 aa).

The signal sequence occupies residues 1–19; it reads MKLIASFSIFMLMSIWSFA. 2 cysteine pairs are disulfide-bonded: Cys-130/Cys-136 and Cys-204/Cys-326. The next 8 helical transmembrane spans lie at 186-206, 229-249, 265-285, 318-338, 345-365, 379-399, 406-426, and 440-460; these read IWVL…PCVF, FVLS…LGLV, IILG…FGAW, ISGL…LLYI, LLGF…LILF, WMNI…LMFV, MATD…FYVM, and ALVI…TIFG. In terms of domain architecture, Thioredoxin spans 443–592; sequence IFIGLFASAM…AFAAHAKNIL (150 aa). Cys-508 and Cys-511 are joined by a disulfide.

The protein belongs to the thioredoxin family. DsbD subfamily.

Its subcellular location is the cell inner membrane. The enzyme catalyses [protein]-dithiol + NAD(+) = [protein]-disulfide + NADH + H(+). It catalyses the reaction [protein]-dithiol + NADP(+) = [protein]-disulfide + NADPH + H(+). Its function is as follows. Required to facilitate the formation of correct disulfide bonds in some periplasmic proteins and for the assembly of the periplasmic c-type cytochromes. Acts by transferring electrons from cytoplasmic thioredoxin to the periplasm. This transfer involves a cascade of disulfide bond formation and reduction steps. This chain is Thiol:disulfide interchange protein DsbD, found in Pseudoalteromonas atlantica (strain T6c / ATCC BAA-1087).